A 220-amino-acid chain; its full sequence is Endonuclease NucS (220 aa).

The protein belongs to the NucS endonuclease family.

It is found in the cytoplasm. Its function is as follows. Cleaves both 3' and 5' ssDNA extremities of branched DNA structures. The chain is Endonuclease NucS from Frankia alni (strain DSM 45986 / CECT 9034 / ACN14a).